Consider the following 330-residue polypeptide: GMP reductase (330 aa).

The active-site Thioimidate intermediate is Cys180. Residue 209–232 participates in NADP(+) binding; the sequence is LIADGGIRHNGDIAKSVRFGASMV.

It belongs to the IMPDH/GMPR family. GuaC type 2 subfamily.

The catalysed reaction is IMP + NH4(+) + NADP(+) = GMP + NADPH + 2 H(+). Functionally, catalyzes the irreversible NADPH-dependent deamination of GMP to IMP. It functions in the conversion of nucleobase, nucleoside and nucleotide derivatives of G to A nucleotides, and in maintaining the intracellular balance of A and G nucleotides. The polypeptide is GMP reductase (Lactobacillus delbrueckii subsp. bulgaricus (strain ATCC BAA-365 / Lb-18)).